A 461-amino-acid chain; its full sequence is Fumarate hydratase class II (461 aa).

Residues 99–101 (SGT), 130–133 (HPND), 140–142 (STN), and Thr188 contribute to the substrate site. His189 acts as the Proton donor/acceptor in catalysis. The active site involves Ser319. Substrate-binding positions include Ser320 and 325–327 (KVN).

This sequence belongs to the class-II fumarase/aspartase family. Fumarase subfamily. In terms of assembly, homotetramer.

It localises to the cytoplasm. The enzyme catalyses (S)-malate = fumarate + H2O. It participates in carbohydrate metabolism; tricarboxylic acid cycle; (S)-malate from fumarate: step 1/1. Involved in the TCA cycle. Catalyzes the stereospecific interconversion of fumarate to L-malate. The polypeptide is Fumarate hydratase class II (Prochlorococcus marinus subsp. pastoris (strain CCMP1986 / NIES-2087 / MED4)).